Here is a 556-residue protein sequence, read N- to C-terminus: Polypeptide N-acetylgalactosaminyltransferase 13 (556 aa).

Residues 1 to 4 (MRRF) are Cytoplasmic-facing. The chain crosses the membrane as a helical; Signal-anchor for type II membrane protein span at residues 5–27 (VYCKVVLATSLMWVLVDVFLLLY). The Lumenal segment spans residues 28-556 (FSECNKCDDK…WLLRNMTLGT (529 aa)). N-linked (GlcNAc...) asparagine glycans are attached at residues asparagine 94 and asparagine 116. 5 disulfides stabilise this stretch: cysteine 105-cysteine 338, cysteine 329-cysteine 407, cysteine 441-cysteine 458, cysteine 481-cysteine 496, and cysteine 522-cysteine 539. A catalytic subdomain A region spans residues 114-224 (LPNTSVVIVF…LGWLEPLLAR (111 aa)). Substrate is bound by residues aspartate 155 and arginine 185. 2 residues coordinate Mn(2+): aspartate 208 and histidine 210. The catalytic subdomain B stretch occupies residues 284 to 346 (PVRTPTMAGG…TCSHVGHVFR (63 aa)). Substrate is bound at residue tryptophan 315. Histidine 343 contributes to the Mn(2+) binding site. Residues arginine 346 and tyrosine 351 each coordinate substrate. A Ricin B-type lectin domain is found at 428–550 (YSLGEIRNVE…GSRSQQWLLR (123 aa)). A glycan (N-linked (GlcNAc...) asparagine) is linked at asparagine 551.

Belongs to the glycosyltransferase 2 family. GalNAc-T subfamily. It depends on Mn(2+) as a cofactor. Specifically expressed in neuronal cells. Expressed in fetal brain, whole adult brain, cerebral cortex and cerebellum. Not expressed in other tissues tested.

Its subcellular location is the golgi apparatus membrane. The catalysed reaction is L-seryl-[protein] + UDP-N-acetyl-alpha-D-galactosamine = a 3-O-[N-acetyl-alpha-D-galactosaminyl]-L-seryl-[protein] + UDP + H(+). It catalyses the reaction L-threonyl-[protein] + UDP-N-acetyl-alpha-D-galactosamine = a 3-O-[N-acetyl-alpha-D-galactosaminyl]-L-threonyl-[protein] + UDP + H(+). The protein operates within protein modification; protein glycosylation. Catalyzes the initial reaction in O-linked oligosaccharide biosynthesis, the transfer of an N-acetyl-D-galactosamine (GalNAc) residue from UDP-GalNAc to a serine or threonine residue on the protein receptor. Generates GalNAc-O-Ser/Thr structure also known as Tn antigen, which itself is immunogenic but also serves as a precursor for the synthesis of different mucin-type O-glycan core structures. Contributes to the synthesis of O-linked glycans on mucins and proteoglycans of the central nervous system. May promote neurogenesis through glycosylation and stabilization of PDPN. Its function is as follows. Can glycosylate both unmodified peptides and glycopeptides that already contain an O-linked GalNAc sugar. Transfers GalNAc to Thr-/Ser-rich tandem repeats GTTPSPVPTTSTTSAP of MUC5AC, specifically on Thr-3 of non-glycosylated MUC5AC peptide, on Thr-12 and Thr-13 of preglycosylated MUC5AC at Thr-3 (MUC5AC-3), on Thr-3 of preglycosylated MUC5AC at Thr-13 (MUC5AC-13) and on Thr-12 of preglycosylated MUC5AC at Thr-3 and Thr-13 (MUC5AC-3,13). Transfers GalNAc to three consecutive serine/threonine residues on SDC3 forming a triplet-Tn epitope expressed in Purkinje cells of the developing brain. Functionally, can glycosylate both unmodified peptides and glycopeptides that already contain an O-linked GalNAc sugar. Transfers GalNAc to Thr-/Ser-rich tandem repeats GTTPSPVPTTSTTSAP of MUC5AC, specifically on Thr-3 of non-glycosylated MUC5AC peptide, on Thr-12 and Thr-13 of preglycosylated MUC5AC at Thr-3 (MUC5AC-3), on Thr-3 of preglycosylated MUC5AC at Thr-13 (MUC5AC-13) and on Thr-12 of preglycosylated MUC5AC at Thr-3 and Thr-13 (MUC5AC-3,13). In Homo sapiens (Human), this protein is Polypeptide N-acetylgalactosaminyltransferase 13 (GALNT13).